The chain runs to 471 residues: Mannose-1-phosphate guanylyltransferase (471 aa).

This sequence belongs to the mannose-6-phosphate isomerase type 2 family.

The catalysed reaction is alpha-D-mannose 1-phosphate + GTP + H(+) = GDP-alpha-D-mannose + diphosphate. It participates in nucleotide-sugar biosynthesis; GDP-alpha-D-mannose biosynthesis; GDP-alpha-D-mannose from alpha-D-mannose 1-phosphate (GTP route): step 1/1. Functionally, involved in the biosynthesis of the K2 capsular polysaccharide biosynthesis. This Klebsiella pneumoniae protein is Mannose-1-phosphate guanylyltransferase (manC).